The primary structure comprises 238 residues: LRRN4 C-terminal-like protein (238 aa).

An N-terminal signal peptide occupies residues 1–22 (MLGSPCLLWLLAVTFLVPRAQP). Residues 23 to 194 (LAPQDFEEEE…RLAVPPNPRT (172 aa)) are Extracellular-facing. The region spanning 82–176 (PPDPPRMGEV…AGGEGLEGAD (95 aa)) is the Fibronectin type-III domain. N132 carries N-linked (GlcNAc...) asparagine glycosylation. Residues 195–215 (LVHAAVGVGTALALLSCAALV) traverse the membrane as a helical segment. The Cytoplasmic portion of the chain corresponds to 216 to 238 (WHFCLRDRWGCPRRAAARAAGAL).

It is found in the membrane. This chain is LRRN4 C-terminal-like protein (LRRN4CL), found in Homo sapiens (Human).